We begin with the raw amino-acid sequence, 86 residues long: UPF0335 protein BR1752/BS1330_I1746 (86 aa).

Belongs to the UPF0335 family.

The polypeptide is UPF0335 protein BR1752/BS1330_I1746 (Brucella suis biovar 1 (strain 1330)).